A 364-amino-acid chain; its full sequence is Fructose-bisphosphate aldolase A (364 aa).

The residue at position 5 (Tyr-5) is a Phosphotyrosine. Thr-9 carries the phosphothreonine modification. Phosphoserine occurs at positions 36 and 39. Lys-42 bears the N6-acetyllysine; alternate mark. Lys-42 is covalently cross-linked (Glycyl lysine isopeptide (Lys-Gly) (interchain with G-Cter in SUMO1); alternate). Lys-42 is covalently cross-linked (Glycyl lysine isopeptide (Lys-Gly) (interchain with G-Cter in SUMO2); alternate). Position 43 (Arg-43) interacts with beta-D-fructose 1,6-bisphosphate. The residue at position 46 (Ser-46) is a Phosphoserine. Position 99 is an N6-(2-hydroxyisobutyryl)lysine (Lys-99). At Lys-108 the chain carries N6-acetyllysine. The residue at position 111 (Lys-111) is an N6-acetyllysine; alternate. Lys-111 carries the post-translational modification N6-malonyllysine; alternate. Ser-132 carries the phosphoserine modification. N6-(2-hydroxyisobutyryl)lysine is present on Lys-147. The active-site Proton acceptor is Glu-188. The active-site Schiff-base intermediate with dihydroxyacetone-P is the Lys-230. Ser-272 is subject to Phosphoserine. Residues 272–274, Ser-301, and Arg-304 each bind beta-D-fructose 1,6-bisphosphate; that span reads SGG. Lys-312 carries the post-translational modification N6-malonyllysine. The residue at position 330 (Lys-330) is an N6-acetyllysine.

The protein belongs to the class I fructose-bisphosphate aldolase family. In terms of assembly, homotetramer. Interacts with SNX9 and WAS. Interacts with FBP2; the interaction blocks FBP2 inhibition by physiological concentrations of AMP and reduces inhibition by Ca(2+). Expressed in muscle, brain and hepatoma cells.

Its subcellular location is the cytoplasm. The protein resides in the myofibril. It localises to the sarcomere. It is found in the i band. The protein localises to the m line. The enzyme catalyses beta-D-fructose 1,6-bisphosphate = D-glyceraldehyde 3-phosphate + dihydroxyacetone phosphate. The protein operates within carbohydrate degradation; glycolysis; D-glyceraldehyde 3-phosphate and glycerone phosphate from D-glucose: step 4/4. Its function is as follows. Catalyzes the reversible conversion of beta-D-fructose 1,6-bisphosphate (FBP) into two triose phosphate and plays a key role in glycolysis and gluconeogenesis. In addition, may also function as scaffolding protein. This Rattus norvegicus (Rat) protein is Fructose-bisphosphate aldolase A (Aldoa).